The following is a 215-amino-acid chain: T-complex protein 10A homolog 1 (215 aa).

The interval 1 to 25 is disordered; that stretch reads MLAGQLEARDPKEGTHPEDPCPGAG. The segment covering 7 to 19 has biased composition (basic and acidic residues); that stretch reads EARDPKEGTHPED. Residues 69–110 are a coiled coil; sequence ADVHGKLRSHIDALREQNMELREKLRALQLQRWKARKKSAAS. The interval 75 to 96 is leucine-zipper; it reads LRSHIDALREQNMELREKLRAL. A compositionally biased stretch (polar residues) spans 150–163; sequence ATLLGQRSSSNNSA. A disordered region spans residues 150-215; it reads ATLLGQRSSS…TPCAERRGGV (66 aa).

The protein belongs to the TCP10 family. In terms of assembly, self-associates (via leucine zipper). Interacts (via leucine zipper) with ZIPK/DAPK3 (via leucine zipper). Interacts with MAD4. Expressed in liver and testis. Expressed in the seminiferous tubules (at protein level).

It is found in the nucleus. In terms of biological role, may be involved in transcriptional regulation. Has in vitro transcription inhibition activity. Acts as a tumor suppressor in hepatocellular carcinoma (HCC) cells. The protein is T-complex protein 10A homolog 1 (TCP10L) of Homo sapiens (Human).